Here is a 352-residue protein sequence, read N- to C-terminus: Protein RecA (352 aa).

67–74 (GPESSGKT) provides a ligand contact to ATP.

This sequence belongs to the RecA family.

Its subcellular location is the cytoplasm. In terms of biological role, can catalyze the hydrolysis of ATP in the presence of single-stranded DNA, the ATP-dependent uptake of single-stranded DNA by duplex DNA, and the ATP-dependent hybridization of homologous single-stranded DNAs. It interacts with LexA causing its activation and leading to its autocatalytic cleavage. The protein is Protein RecA of Klebsiella pneumoniae subsp. pneumoniae (strain ATCC 700721 / MGH 78578).